A 634-amino-acid chain; its full sequence is Threonine--tRNA ligase (634 aa).

In terms of domain architecture, TGS spans 1 to 61 (MINIRFPDGS…NSNCELRLIT (61 aa)). The segment at 241–532 (DHRKIGKVLD…LIEHYAGNLP (292 aa)) is catalytic. Zn(2+)-binding residues include Cys-332, His-383, and His-509.

The protein belongs to the class-II aminoacyl-tRNA synthetase family. As to quaternary structure, homodimer. The cofactor is Zn(2+).

Its subcellular location is the cytoplasm. The catalysed reaction is tRNA(Thr) + L-threonine + ATP = L-threonyl-tRNA(Thr) + AMP + diphosphate + H(+). Its function is as follows. Catalyzes the attachment of threonine to tRNA(Thr) in a two-step reaction: L-threonine is first activated by ATP to form Thr-AMP and then transferred to the acceptor end of tRNA(Thr). Also edits incorrectly charged L-seryl-tRNA(Thr). This chain is Threonine--tRNA ligase, found in Francisella tularensis subsp. tularensis (strain WY96-3418).